The primary structure comprises 424 residues: Adenylosuccinate synthetase 2 (424 aa).

GTP-binding positions include 11–17 (GDEGKGK) and 39–41 (GHT). Residue Asp12 is the Proton acceptor of the active site. The Mg(2+) site is built by Asp12 and Gly39. IMP-binding positions include 12-15 (DEGK), 37-40 (NAGH), Thr127, Arg141, Gln223, Thr238, and Arg302. His40 (proton donor) is an active-site residue. A substrate-binding site is contributed by 298 to 304 (TTTGRGR). GTP-binding positions include Arg304, 330 to 332 (KLD), and 412 to 414 (SVG).

The protein belongs to the adenylosuccinate synthetase family. As to quaternary structure, homodimer. Mg(2+) is required as a cofactor.

The protein resides in the cytoplasm. The enzyme catalyses IMP + L-aspartate + GTP = N(6)-(1,2-dicarboxyethyl)-AMP + GDP + phosphate + 2 H(+). The protein operates within purine metabolism; AMP biosynthesis via de novo pathway; AMP from IMP: step 1/2. Its function is as follows. Plays an important role in the de novo pathway of purine nucleotide biosynthesis. Catalyzes the first committed step in the biosynthesis of AMP from IMP. The protein is Adenylosuccinate synthetase 2 of Methanosarcina acetivorans (strain ATCC 35395 / DSM 2834 / JCM 12185 / C2A).